The primary structure comprises 158 residues: Small ribosomal subunit protein uS9 (158 aa).

It belongs to the universal ribosomal protein uS9 family.

The protein is Small ribosomal subunit protein uS9 of Brucella canis (strain ATCC 23365 / NCTC 10854 / RM-666).